We begin with the raw amino-acid sequence, 136 residues long: MARTKQTARKSTGGKAPRKQLATKAARKSAPATGGVKKPHRFRPGTVALREIRKYQKSTELLIRKLPFQRLVREIAQDFKADLRFQSSAVAALQEASESYLVGLFEDTNLCAIHAKRVTIMPKDIQLARRIRGERA.

The tract at residues Met1–Arg43 is disordered. Lys5 bears the N6-methylated lysine mark. Lys10 bears the N6-acetyllysine; alternate mark. The residue at position 10 (Lys10) is an N6-methylated lysine; alternate. Residue Ser11 is modified to Phosphoserine. Position 12 is a phosphothreonine (Thr12). N6-acetyllysine is present on Lys15. Residues Lys19 and Lys24 each carry the N6-acetyllysine; alternate modification. Lys19 and Lys24 each carry N6-methylated lysine; alternate. Lys28 carries the N6-methylated lysine modification. Position 29 is a phosphoserine (Ser29). The residue at position 37 (Lys37) is an N6-methylated lysine.

This sequence belongs to the histone H3 family. As to quaternary structure, the nucleosome is a histone octamer containing two molecules each of H2A, H2B, H3 and H4 assembled in one H3-H4 heterotetramer and two H2A-H2B heterodimers. The octamer wraps approximately 147 bp of DNA. Acetylation is generally linked to gene activation. Can be acetylated to form H3K9ac, H3K14ac, H3K18ac and H3K23ac. H3K9ac could compete with H3K9me and prevent gene silencing. H3K9ac is restricted to euchromatin. Post-translationally, methylated to form mainly H3K4me, H3K9me, H3K18me, H3K23me, H3K27me and H3K36me. H3K4me1/2/3, H3K9me3, H3K27me3 and H3K36me1/2/3 are typical marks for euchromatin, whereas heterochromatic chromocenters are enriched in H3K9me1/2 and H3K27me1/2. H2BK143ub1 is probably prerequisite for H3K4me. In terms of processing, can be phosphorylated to form H3S10ph, H3T11ph and H3S28ph. Expressed in bicellular pollen, root tips, shoot apices, young leaves and ovules.

The protein localises to the nucleus. The protein resides in the nucleolus. Its subcellular location is the chromosome. Functionally, core component of nucleosome. Nucleosomes wrap and compact DNA into chromatin, limiting DNA accessibility to the cellular machineries which require DNA as a template. Histones thereby play a central role in transcription regulation, DNA repair, DNA replication and chromosomal stability. DNA accessibility is regulated via a complex set of post-translational modifications of histones, also called histone code, and nucleosome remodeling. This chain is Histone H3.2 (YAH3), found in Lilium longiflorum (Trumpet lily).